The following is a 188-amino-acid chain: Mediator of RNA polymerase II transcription subunit 11 (188 aa).

Positions K46–Q72 form a coiled coil. Residues D116 to Q188 form a disordered region. Residues Q123–A141 show a composition bias toward acidic residues. The span at S146–D155 shows a compositional bias: low complexity. Residues S171–T180 show a composition bias toward basic and acidic residues.

It belongs to the Mediator complex subunit 11 family. In terms of assembly, component of the Mediator complex.

It is found in the nucleus. Functionally, component of the Mediator complex, a coactivator involved in the regulated transcription of nearly all RNA polymerase II-dependent genes. Mediator functions as a bridge to convey information from gene-specific regulatory proteins to the basal RNA polymerase II transcription machinery. Mediator is recruited to promoters by direct interactions with regulatory proteins and serves as a scaffold for the assembly of a functional pre-initiation complex with RNA polymerase II and the general transcription factors. The chain is Mediator of RNA polymerase II transcription subunit 11 (mdt-11) from Caenorhabditis elegans.